Reading from the N-terminus, the 193-residue chain is dTTP/UTP pyrophosphatase (193 aa).

D75 functions as the Proton acceptor in the catalytic mechanism.

Belongs to the Maf family. YhdE subfamily. A divalent metal cation is required as a cofactor.

It localises to the cytoplasm. The enzyme catalyses dTTP + H2O = dTMP + diphosphate + H(+). It catalyses the reaction UTP + H2O = UMP + diphosphate + H(+). Its function is as follows. Nucleoside triphosphate pyrophosphatase that hydrolyzes dTTP and UTP. May have a dual role in cell division arrest and in preventing the incorporation of modified nucleotides into cellular nucleic acids. In Chlorobium phaeovibrioides (strain DSM 265 / 1930) (Prosthecochloris vibrioformis (strain DSM 265)), this protein is dTTP/UTP pyrophosphatase.